Here is a 427-residue protein sequence, read N- to C-terminus: MSRSETLFANAQKHIPGGVNSPVRAFKSVGGTPLFFKHAEGAYVTDEDDKRYVDYVGSWGPMILGHSHPDVLDAVRNQLQHGLSYGAPTAMETEMADLVCSLVPSLEMVRMVSSGTEATMSAIRLARGFTGRDSIIKFEGCYHGHSDSLLVKAGSGALTQGVPSSAGVPAAFAKHTLTLPFNDIDAVEKMLAEVGQDVACIIVEPVAGNMNCVPPAPGFLEGLRSLCDKHGVVLIFDEVMTGFRVALGGAQAYYGVTPDLTTFGKIIGGGMPVGCFGGKRLIMERIAPLGPVYQAGTLSGNPLAMAAGLTTLRLISRPGFHAELTDYTTRLLDGLQQRADAAGIPFVTTQAGGMFGLYFSGADDIVTFEDVMASDAALFGRFFHLMLEGGVYLAPSAFEAGFTSIAHGEAELKLTLDAAERAFAKLK.

The residue at position 265 (Lys265) is an N6-(pyridoxal phosphate)lysine.

This sequence belongs to the class-III pyridoxal-phosphate-dependent aminotransferase family. HemL subfamily. As to quaternary structure, homodimer. Pyridoxal 5'-phosphate is required as a cofactor.

The protein resides in the cytoplasm. The enzyme catalyses (S)-4-amino-5-oxopentanoate = 5-aminolevulinate. The protein operates within porphyrin-containing compound metabolism; protoporphyrin-IX biosynthesis; 5-aminolevulinate from L-glutamyl-tRNA(Glu): step 2/2. The polypeptide is Glutamate-1-semialdehyde 2,1-aminomutase (Pseudomonas fluorescens (strain Pf0-1)).